Here is a 465-residue protein sequence, read N- to C-terminus: MNVTSLFSFTSPAVKRLLGWKQGDEEEKWAEKAVDALVKKLKKKKGAMEELEKALSCPGQPSNCVTIPRSLDGRLQVSHRKGLPHVIYCRVWRWPDLQSHHELKPLECCEFPFGSKQKEVCINPYHYKRVESPVLPPVLVPRHSEYNPQHSLLAQFRNLGQNEPHMPLNATFPDSFQQPNSHPFPHSPNSSYPNSPGSSSSTYPHSPTSSDPGSPFQMPADTPPPAYLPPEDPMTQDGSQPMDTNMMAPSLPSEINRGDVQAVAYEEPKHWCSIVYYELNNRVGEAFHASSTSVLVDGFTDPSNNKNRFCLGLLSNVNRNSTIENTRRHIGKGVHLYYVGGEVYAECLSDSSIFVQSRNCNYHHGFHPTTVCKIPSGCSLKIFNNQEFAQLLAQSVNHGFETVYELTKMCTIRMSFVKGWGAEYHRQDVTSTPCWIEIHLHGPLQWLDKVLTQMGSPHNPISSVS.

The residue at position 1 (Met-1) is an N-acetylmethionine. The 125-residue stretch at Pro-12–Pro-136 folds into the MH1 domain. The Zn(2+) site is built by Cys-64, Cys-109, Cys-121, and His-126. Residues Asn-162–Pro-249 are disordered. Over residues Pro-179–Ser-210 the composition is skewed to low complexity. Residues Asp-221–Asp-232 are compositionally biased toward pro residues. One can recognise an MH2 domain in the interval Trp-271–Ser-465. At Thr-322 the chain carries Phosphothreonine; by MINK1, TNIK and MAP4K4. The interval Lys-418–Asp-428 is L3 loop. 2 positions are modified to phosphoserine: Ser-463 and Ser-465.

This sequence belongs to the dwarfin/SMAD family. Found in a complex with SMAD4 and YY1. Interacts with HGS, NANOG and ZCCHC12. Upon C-terminus phosphorylation: forms trimers with another SMAD1 and the co-SMAD SMAD4. Interacts with PEBP2-alpha subunit, CREB-binding protein (CBP), p300, SMURF1, SMURF2, USP15 and HOXC8. Associates with ZNF423 or ZNF521 in response to BMP2 leading to activate transcription of BMP target genes. Interacts with SKOR1. Interacts (via MH2 domain) with LEMD3. Binding to LEMD3 results in at least a partial reduction of receptor-mediated phosphorylation. Forms a ternary complex with PSMB4 and OAZ1 before PSMB4 is incorporated into the 20S proteasome. Interacts (via MH2 domain) with FAM83G (via MH2 domain); in a SMAD4-independent manner. Interacts with ZC3H3. Interacts with TMEM119. Interacts (via MH1 and MH2 domains) with ZNF8. Interacts with RANBP3L; the interaction increases when SMAD1 is not phosphorylated and mediates SMAD1 nuclear export. Interacts with EGR1; this interaction inhibits SMAD1 dephosphorylation. Interacts with SMAD6. Interacts with YAP1. Interacts with MTMR4; negatively regulates BMP signaling through SMAD1 dephosphorylation and retention in endosomes. In terms of processing, phosphorylation of the C-terminal SVS motif by BMP type 1 receptor kinase activates SMAD1 by promoting dissociation from the receptor and trimerization with SMAD4. Phosphorylation by ERK2 MAP kinase in response to EGF or HGF prevents SMAD1 nuclear accumulation and transcriptional activity in response to BMP. Dephosphorylation, probably by PPM1A, induces its export from the nucleus to the cytoplasm. Dephosphorylation is inhibited by association with EGR1. Phosphorylation by CDK8/9 creates binding sites for YAP1, and subsequent phosphorylation by GSK3 switches off YAP1 binding and adds binding sites for SMURF1. Ubiquitinated by SMAD-specific E3 ubiquitin ligase SMURF1, leading to its degradation. Monoubiquitinated, leading to prevent DNA-binding. Deubiquitination by USP15 alleviates inhibition and promotes activation of TGF-beta target genes. Dephosphorylation, probably by PPM1A, induces its export from the nucleus to the cytoplasm. Phospho-SMAD1 is ubiquitinated by CHIP leading to disruption of the SMAD1-SMAD4 complex.

It localises to the cytoplasm. The protein resides in the nucleus. Its function is as follows. Transcriptional modulator that plays a role in various cellular processes, including embryonic development, cell differentiation, and tissue homeostasis. Upon BMP ligand binding to their receptors at the cell surface, is phosphorylated by activated type I BMP receptors (BMPRIs) and associates with SMAD4 to form an heteromeric complex which translocates into the nucleus acting as transcription factor. In turn, the hetero-trimeric complex recognizes cis-regulatory elements containing Smad Binding Elements (SBEs) to modulate the outcome of the signaling network. SMAD1/OAZ1/PSMB4 complex mediates the degradation of the CREBBP/EP300 repressor SNIP1. Positively regulates BMP4-induced expression of odontogenic development regulator MSX1 following IPO7-mediated nuclear import. The chain is Mothers against decapentaplegic homolog 1 (SMAD1) from Bos taurus (Bovine).